A 551-amino-acid polypeptide reads, in one-letter code: Chloride channel CLIC-like protein 1 (551 aa).

The first 18 residues, Met1 to Ala18, serve as a signal peptide directing secretion. Over His19–Asn184 the chain is Lumenal. The helical transmembrane segment at Val185–Thr205 threads the bilayer. Residues Tyr206 to Val216 lie on the Cytoplasmic side of the membrane. A helical transmembrane segment spans residues Leu217–Phe237. The Lumenal portion of the chain corresponds to Ala238 to Glu329. The helical transmembrane segment at Ile330–Cys350 threads the bilayer. Residues Tyr351 to Gly551 lie on the Cytoplasmic side of the membrane. The segment at Ile363–Thr415 is disordered. The span at Arg380–Pro389 shows a compositional bias: basic and acidic residues. Ser438 and Ser464 each carry phosphoserine. The segment at Val447–Gly551 is disordered. Thr482 carries the phosphothreonine modification. A compositionally biased stretch (polar residues) spans Thr488 to Gly508. Ser509, Ser524, and Ser532 each carry phosphoserine.

Belongs to the chloride channel MCLC family. In terms of assembly, homomultimers. Interacts with mitochondrial protein PIGBOS1 (via C-terminus); the interaction occurs at the mitochondria-associated endoplasmic reticulum (ER) membrane, a zone of contact between the ER and mitochondrial membranes, but does not appear to play a role in ER-mitochondria tethering and is not affected by ER stress. Interacts with CALR. In terms of tissue distribution, expressed in the retina of the eye, with extensive expression in the lamina cribrosa, optic nerve, ganglion cell layer, inner nuclear layer, outer nuclear layer and retinal pigment epithelium.

The protein localises to the endoplasmic reticulum membrane. The enzyme catalyses chloride(in) = chloride(out). It carries out the reaction bromide(in) = bromide(out). The catalysed reaction is nitrate(in) = nitrate(out). It catalyses the reaction fluoride(in) = fluoride(out). Inhibited by ER lumenal Ca(2+). Anion-selective channel with Ca(2+)-dependent and voltage-independent gating. Permeable to small monovalent anions with selectivity for bromide &gt; chloride &gt; nitrate &gt; fluoride. Operates in the endoplasmic reticulum (ER) membrane where it mediates chloride efflux to compensate for the loss of positive charges from the ER lumen upon Ca(2+) release. Contributes to the maintenance of ER Ca(2+) pools and activation of unfolded protein response to prevent accumulation of misfolded proteins in the ER lumen. Particularly involved in ER homeostasis mechanisms underlying motor neurons and retinal photoreceptors survival. The sequence is that of Chloride channel CLIC-like protein 1 from Homo sapiens (Human).